Reading from the N-terminus, the 453-residue chain is Neuraminidase (453 aa).

The Intravirion segment spans residues 1–6; it reads MNPNQK. Residues 7 to 27 traverse the membrane as a helical segment; it reads IITIGSICMVVGIISLILQIG. Residues 11 to 33 form an involved in apical transport and lipid raft association region; it reads GSICMVVGIISLILQIGNIISIW. Over 28-453 the chain is Virion surface; sequence NIISIWISHS…GAELPFTIDK (426 aa). The tract at residues 36–74 is hypervariable stalk region; it reads HSIQTGNQNHTGICNQGIITYNVVAGQDSTSVILTGNSS. N-linked (GlcNAc...) asparagine; by host glycosylation is found at N44 and N72. Residues 75–453 form a head of neuraminidase region; it reads LCPIRGWAIH…GAELPFTIDK (379 aa). 8 cysteine pairs are disulfide-bonded: C76–C401, C108–C113, C168–C215, C217–C222, C263–C276, C265–C274, C302–C319, and C405–C430. Residue R102 coordinates substrate. N-linked (GlcNAc...) asparagine; by host glycosylation occurs at N130. Residue D135 is the Proton donor/acceptor of the active site. Substrate is bound at residue R136. N-linked (GlcNAc...) asparagine; by host glycosylation is present at N219. 261-262 provides a ligand contact to substrate; that stretch reads EE. A substrate-binding site is contributed by R277. Ca(2+) contacts are provided by D278, G282, D308, and N328. Residue R352 participates in substrate binding. Y386 functions as the Nucleophile in the catalytic mechanism.

It belongs to the glycosyl hydrolase 34 family. As to quaternary structure, homotetramer. Requires Ca(2+) as cofactor. N-glycosylated.

The protein localises to the virion membrane. The protein resides in the host apical cell membrane. It catalyses the reaction Hydrolysis of alpha-(2-&gt;3)-, alpha-(2-&gt;6)-, alpha-(2-&gt;8)- glycosidic linkages of terminal sialic acid residues in oligosaccharides, glycoproteins, glycolipids, colominic acid and synthetic substrates.. Inhibited by the neuraminidase inhibitors zanamivir (Relenza) and oseltamivir (Tamiflu). These drugs interfere with the release of progeny virus from infected cells and are effective against all influenza strains. Resistance to neuraminidase inhibitors is quite rare. Unlike other strains, A/WSN/33 neuraminidase binds and activates plasminogen into plasmin in the vicinity of HA so that activated plasmin cleaves HA rendering the virus infectious. Functionally, catalyzes the removal of terminal sialic acid residues from viral and cellular glycoconjugates. Cleaves off the terminal sialic acids on the glycosylated HA during virus budding to facilitate virus release. Additionally helps virus spread through the circulation by further removing sialic acids from the cell surface. These cleavages prevent self-aggregation and ensure the efficient spread of the progeny virus from cell to cell. Otherwise, infection would be limited to one round of replication. Described as a receptor-destroying enzyme because it cleaves a terminal sialic acid from the cellular receptors. May facilitate viral invasion of the upper airways by cleaving the sialic acid moieties on the mucin of the airway epithelial cells. Likely to plays a role in the budding process through its association with lipid rafts during intracellular transport. May additionally display a raft-association independent effect on budding. Plays a role in the determination of host range restriction on replication and virulence. Sialidase activity in late endosome/lysosome traffic seems to enhance virus replication. In Influenza A virus (strain A/Wilson-Smith/1933 H1N1) (Influenza A virus (strain A/WS/1933 H1N1)), this protein is Neuraminidase.